We begin with the raw amino-acid sequence, 232 residues long: Putative membrane protein ORF8 (232 aa).

Over residues 71–84 the composition is skewed to low complexity; the sequence is GSSAASIPSAPTPD. Residues 71-121 form a disordered region; that stretch reads GSSAASIPSAPTPDATRESPTGEPHRDRALSTETPTPEPSRDGGSTPEVLH. Helical transmembrane passes span 166 to 182 and 195 to 211; these read VFAR…GSVA and LVVT…WVIV.

Its subcellular location is the membrane. In Ictalurid herpesvirus 1 (strain Auburn) (IcHV-1), this protein is Putative membrane protein ORF8 (ORF8).